The following is a 313-amino-acid chain: Beta-ketoacyl-[acyl-carrier-protein] synthase III (313 aa).

Catalysis depends on residues cysteine 112 and histidine 238. The interval 239 to 243 (QANIR) is ACP-binding. Residue asparagine 268 is part of the active site.

Belongs to the thiolase-like superfamily. FabH family. Homodimer.

It is found in the cytoplasm. The catalysed reaction is malonyl-[ACP] + acetyl-CoA + H(+) = 3-oxobutanoyl-[ACP] + CO2 + CoA. It participates in lipid metabolism; fatty acid biosynthesis. Functionally, catalyzes the condensation reaction of fatty acid synthesis by the addition to an acyl acceptor of two carbons from malonyl-ACP. Catalyzes the first condensation reaction which initiates fatty acid synthesis and may therefore play a role in governing the total rate of fatty acid production. Possesses both acetoacetyl-ACP synthase and acetyl transacylase activities. Its substrate specificity determines the biosynthesis of branched-chain and/or straight-chain of fatty acids. This is Beta-ketoacyl-[acyl-carrier-protein] synthase III from Staphylococcus haemolyticus (strain JCSC1435).